The sequence spans 207 residues: Large ribosomal subunit protein uL4 (207 aa).

A disordered region spans residues 58 to 78; that stretch reads AGGGKKPWRQKGTGRARHGSI. Basic residues predominate over residues 63–77; that stretch reads KPWRQKGTGRARHGS.

It belongs to the universal ribosomal protein uL4 family. In terms of assembly, part of the 50S ribosomal subunit.

Its function is as follows. One of the primary rRNA binding proteins, this protein initially binds near the 5'-end of the 23S rRNA. It is important during the early stages of 50S assembly. It makes multiple contacts with different domains of the 23S rRNA in the assembled 50S subunit and ribosome. Forms part of the polypeptide exit tunnel. The polypeptide is Large ribosomal subunit protein uL4 (Aster yellows witches'-broom phytoplasma (strain AYWB)).